Here is a 232-residue protein sequence, read N- to C-terminus: Ribosomal RNA small subunit methyltransferase G (232 aa).

S-adenosyl-L-methionine is bound by residues G75, F80, 126-127 (AE), and R143.

The protein belongs to the methyltransferase superfamily. RNA methyltransferase RsmG family.

It is found in the cytoplasm. Specifically methylates the N7 position of a guanine in 16S rRNA. The polypeptide is Ribosomal RNA small subunit methyltransferase G (Fusobacterium nucleatum subsp. nucleatum (strain ATCC 25586 / DSM 15643 / BCRC 10681 / CIP 101130 / JCM 8532 / KCTC 2640 / LMG 13131 / VPI 4355)).